Reading from the N-terminus, the 248-residue chain is uncharacterized protein (248 aa).

The helical transmembrane segment at 7 to 25 (TIFIGGIYGLGVYIGAVAW) threads the bilayer.

Belongs to the methyltransferase superfamily. METL family.

The protein resides in the mitochondrion inner membrane. In terms of biological role, probable methyltransferase. This is an uncharacterized protein from Schizosaccharomyces pombe (strain 972 / ATCC 24843) (Fission yeast).